The primary structure comprises 284 residues: Alpha-S1-casein (284 aa).

The N-terminal stretch at 1-15 (MKLLILTCLVAAALA) is a signal peptide. Disordered stretches follow at residues 21–44 (RRNA…IVKQ) and 78–111 (SSAE…SATE). Low complexity-rich tracts occupy residues 24–36 (AVSS…NSSS) and 78–99 (SSAE…SSSS). Residues Ser-79, Ser-93, Ser-94, Ser-95, Ser-96, Ser-97, Ser-98, and Ser-99 each carry the phosphoserine modification. A run of 10 repeats spans residues 138–143 (LLQQAS), 144–149 (LAQQAS), 150–155 (LAQQAS), 156–161 (LAQQAL), 162–167 (LAQQPS), 168–173 (LAQQAA), 174–179 (LAQQAS), 180–185 (LAQQAS), 186–191 (LAQQAS), and 192–197 (LAQKHH). The interval 138–197 (LLQQASLAQQASLAQQASLAQQALLAQQPSLAQQAALAQQASLAQQASLAQQASLAQKHH) is 10 X 6 AA tandem repeats.

Belongs to the alpha-casein family. As to expression, mammary gland specific. Secreted in milk.

The protein resides in the secreted. In terms of biological role, important role in the capacity of milk to transport calcium phosphate. The sequence is that of Alpha-S1-casein (Csn1s1) from Rattus norvegicus (Rat).